The primary structure comprises 159 residues: Phosphopantetheine adenylyltransferase (159 aa).

A substrate-binding site is contributed by threonine 10. ATP-binding positions include 10–11 (TF) and histidine 18. Residues lysine 42, leucine 74, and arginine 88 each coordinate substrate. ATP-binding positions include 89-91 (GLR), glutamate 99, and 124-130 (YAFISSS).

Belongs to the bacterial CoaD family. Homohexamer. Mg(2+) is required as a cofactor.

The protein resides in the cytoplasm. It catalyses the reaction (R)-4'-phosphopantetheine + ATP + H(+) = 3'-dephospho-CoA + diphosphate. It participates in cofactor biosynthesis; coenzyme A biosynthesis; CoA from (R)-pantothenate: step 4/5. In terms of biological role, reversibly transfers an adenylyl group from ATP to 4'-phosphopantetheine, yielding dephospho-CoA (dPCoA) and pyrophosphate. The sequence is that of Phosphopantetheine adenylyltransferase from Hydrogenovibrio crunogenus (strain DSM 25203 / XCL-2) (Thiomicrospira crunogena).